The following is a 344-amino-acid chain: 4-hydroxy-3-methylbut-2-en-1-yl diphosphate synthase (flavodoxin) (344 aa).

[4Fe-4S] cluster-binding residues include Cys253, Cys256, Cys288, and Glu295.

The protein belongs to the IspG family. The cofactor is [4Fe-4S] cluster.

It carries out the reaction (2E)-4-hydroxy-3-methylbut-2-enyl diphosphate + oxidized [flavodoxin] + H2O + 2 H(+) = 2-C-methyl-D-erythritol 2,4-cyclic diphosphate + reduced [flavodoxin]. It participates in isoprenoid biosynthesis; isopentenyl diphosphate biosynthesis via DXP pathway; isopentenyl diphosphate from 1-deoxy-D-xylulose 5-phosphate: step 5/6. In terms of biological role, converts 2C-methyl-D-erythritol 2,4-cyclodiphosphate (ME-2,4cPP) into 1-hydroxy-2-methyl-2-(E)-butenyl 4-diphosphate. The polypeptide is 4-hydroxy-3-methylbut-2-en-1-yl diphosphate synthase (flavodoxin) (Thermotoga maritima (strain ATCC 43589 / DSM 3109 / JCM 10099 / NBRC 100826 / MSB8)).